The chain runs to 323 residues: Dihydrodiol dehydrogenase 3 (323 aa).

Residues 20–24 and Asp50 each bind NADP(+); that span reads GFGTF. The active-site Proton donor is the Tyr55. His117 contacts substrate. NADP(+) is bound by residues 166 to 167, Gln190, 216 to 221, and 270 to 280; these read SN, YGALGS, and KSYNKKRIKEN.

It belongs to the aldo/keto reductase family.

It is found in the cytoplasm. The sequence is that of Dihydrodiol dehydrogenase 3 from Bos taurus (Bovine).